The primary structure comprises 570 residues: AT-rich interactive domain-containing protein 3A (570 aa).

Residues 102–215 (AGVPNSSSGH…LAPQAQSQHH (114 aa)) are disordered. Residues 120–160 (DIDDEDDEDDDPELDRGMDDEERDMDEDDSMNEGGGDEDLE) are compositionally biased toward acidic residues. Residue Ser-179 is modified to Phosphoserine. The ARID domain maps to 232-324 (DEKRKEFLDD…YLYPYECEKR (93 aa)). Residue Ser-356 is modified to Phosphoserine. The region spanning 429–523 (AALEQLREKL…GVLFARKPAI (95 aa)) is the REKLES domain. The important for nuclear localization stretch occupies residues 430–473 (ALEQLREKLESGEPPEKKVMLMAEEQQRIMQHALQQNLFAMATQ). The segment at 475–495 (PMNIKLNNRDDRQETALNLST) is homodimerization. The tract at residues 519 to 531 (RKPAIGFMPSSQR) is important for cytoplasmic localization. The segment at 528 to 570 (SSQRVHHQHSSQGKSNSPGLSSHIQPSSSASSSASSHGPATSP) is disordered. Ser-542 and Ser-569 each carry phosphoserine. Low complexity predominate over residues 548 to 570 (SSHIQPSSSASSSASSHGPATSP).

As to quaternary structure, homodimer.

It localises to the nucleus. The protein resides in the cytoplasm. Transcription factor. The sequence is that of AT-rich interactive domain-containing protein 3A (arid3a) from Danio rerio (Zebrafish).